Here is a 119-residue protein sequence, read N- to C-terminus: Large ribosomal subunit protein uL22c (119 aa).

Belongs to the universal ribosomal protein uL22 family. In terms of assembly, part of the 50S ribosomal subunit.

Its subcellular location is the plastid. The protein resides in the chloroplast. Functionally, this protein binds specifically to 23S rRNA. The globular domain of the protein is located near the polypeptide exit tunnel on the outside of the subunit, while an extended beta-hairpin is found that lines the wall of the exit tunnel in the center of the 70S ribosome. The protein is Large ribosomal subunit protein uL22c (rpl22) of Angiopteris evecta (Mule's foot fern).